Here is a 105-residue protein sequence, read N- to C-terminus: Sulfite reductase, dissimilatory-type subunit gamma (105 aa).

It belongs to the DsrC/TusE family. Heterohexamer of two alpha, two beta and two gamma subunits.

Its subcellular location is the cytoplasm. The catalysed reaction is [DsrC protein]-trisulfide + NAD(+) + 3 H2O = [DsrC protein]-dithiol + sulfite + NADH + 3 H(+). Catalyzes the reduction of sulfite to sulfide. This is the terminal oxidation reaction in sulfate respiration, a process catalyzed by the sulfate-reducing bacteria. This chain is Sulfite reductase, dissimilatory-type subunit gamma (dsvC), found in Nitratidesulfovibrio vulgaris (strain ATCC 29579 / DSM 644 / CCUG 34227 / NCIMB 8303 / VKM B-1760 / Hildenborough) (Desulfovibrio vulgaris).